A 132-amino-acid chain; its full sequence is Small ribosomal subunit protein uS11 (132 aa).

Belongs to the universal ribosomal protein uS11 family. As to quaternary structure, part of the 30S ribosomal subunit. Interacts with proteins S7 and S18. Binds to IF-3.

In terms of biological role, located on the platform of the 30S subunit, it bridges several disparate RNA helices of the 16S rRNA. Forms part of the Shine-Dalgarno cleft in the 70S ribosome. This Alcanivorax borkumensis (strain ATCC 700651 / DSM 11573 / NCIMB 13689 / SK2) protein is Small ribosomal subunit protein uS11.